A 112-amino-acid chain; its full sequence is MSLRMRFKPSIENFVNLFSFSCLSFLSHEPHVYLKKASLFGSLSFVSLVKTSFGLLEINLLVAATVIHLIAPTLFEAPTTHLLEWPATVYLIMLGLRIAVLLAKQLLLLLLR.

2 helical membrane passes run 55–75 and 91–111; these read LLEINLLVAATVIHLIAPTLF and LIMLGLRIAVLLAKQLLLLLL.

The protein localises to the membrane. This is an uncharacterized protein from Saccharomyces cerevisiae (strain ATCC 204508 / S288c) (Baker's yeast).